The primary structure comprises 271 residues: MDSTFLASLVSGAAAGTSTDVVFFPIDTLKTRLQAKGGFFHNGGYRGIYRGLGSAVVASAPGASLFFVTYDSMKQQLRPVMGRWTASEQLAEVLTHMLSSSLGEMSACLVRVPAEVIKQRTQTHHTNSSLQTLRLILRDPTGEGVVRGLYRGWWTTIMREIPFTCIQFPLYEYLKKKWAAYAEIERVSAWQGAVCGSLAGGIAAAATTPLDVLKTRMMLHERRVPMLHLARTLFREEGARVFFRGIGPRTMWISAGGAIFLGVYEAVHSLF.

3 Solcar repeats span residues Ser-3–Gln-76, Ala-91–Lys-177, and Val-187–Leu-270. 6 helical membrane-spanning segments follow: residues Leu-6–Ile-26, Gly-51–Asp-71, Met-97–Ile-117, Gly-152–Phe-168, Ala-193–Leu-213, and Met-251–Phe-271.

Belongs to the mitochondrial carrier (TC 2.A.29) family.

Its subcellular location is the mitochondrion inner membrane. The protein is Putative mitochondrial carrier protein PET8 (PET8) of Eremothecium gossypii (strain ATCC 10895 / CBS 109.51 / FGSC 9923 / NRRL Y-1056) (Yeast).